The following is a 249-amino-acid chain: Probable phosphoglycerate mutase (249 aa).

Substrate-binding positions include 9–16, 22–23, Arg-61, 88–91, Lys-99, 115–116, and 184–185; these read RHGESTWN, TG, ERMY, RR, and GN. The active-site Tele-phosphohistidine intermediate is His-10. The active-site Proton donor/acceptor is the Glu-88.

Belongs to the phosphoglycerate mutase family. BPG-dependent PGAM subfamily. In terms of assembly, homodimer.

It catalyses the reaction (2R)-2-phosphoglycerate = (2R)-3-phosphoglycerate. It carries out the reaction (2R)-3-phospho-glyceroyl phosphate = (2R)-2,3-bisphosphoglycerate + H(+). In terms of biological role, catalyzes the interconversion of 2-phosphoglycerate and 3-phosphoglycerate. The sequence is that of Probable phosphoglycerate mutase (gpmA) from Dictyostelium discoideum (Social amoeba).